Consider the following 393-residue polypeptide: Formate-dependent phosphoribosylglycinamide formyltransferase (393 aa).

N(1)-(5-phospho-beta-D-ribosyl)glycinamide-binding positions include 22–23 (EL) and E82. ATP-binding positions include R114, K155, 160–165 (SSGKGQ), 195–198 (EGFI), and E203. Positions 119 to 308 (RLAAEELGLP…EFALHARAIL (190 aa)) constitute an ATP-grasp domain. Mg(2+) is bound by residues E267 and E279. Residues D286, K356, and 363–364 (RR) contribute to the N(1)-(5-phospho-beta-D-ribosyl)glycinamide site.

It belongs to the PurK/PurT family. Homodimer.

It carries out the reaction N(1)-(5-phospho-beta-D-ribosyl)glycinamide + formate + ATP = N(2)-formyl-N(1)-(5-phospho-beta-D-ribosyl)glycinamide + ADP + phosphate + H(+). It functions in the pathway purine metabolism; IMP biosynthesis via de novo pathway; N(2)-formyl-N(1)-(5-phospho-D-ribosyl)glycinamide from N(1)-(5-phospho-D-ribosyl)glycinamide (formate route): step 1/1. Its function is as follows. Involved in the de novo purine biosynthesis. Catalyzes the transfer of formate to 5-phospho-ribosyl-glycinamide (GAR), producing 5-phospho-ribosyl-N-formylglycinamide (FGAR). Formate is provided by PurU via hydrolysis of 10-formyl-tetrahydrofolate. This is Formate-dependent phosphoribosylglycinamide formyltransferase from Stutzerimonas stutzeri (strain A1501) (Pseudomonas stutzeri).